We begin with the raw amino-acid sequence, 506 residues long: Radiation-sensitive protein 28 (506 aa).

WD repeat units lie at residues proline 55–aspartate 94, histidine 193–aspartate 233, arginine 285–serine 325, alanine 357–glutamate 396, and leucine 404–lysine 451.

Its subcellular location is the nucleus. Its function is as follows. Involved in transcription-coupled repair nucleotide excision repair (NER) of UV-induced DNA lesions. This is Radiation-sensitive protein 28 (RAD28) from Saccharomyces cerevisiae (strain ATCC 204508 / S288c) (Baker's yeast).